Reading from the N-terminus, the 128-residue chain is Organic solute transporter subunit beta (128 aa).

The Extracellular segment spans residues 1–30 (MDHSAEKAAANAEVPQELLEEMLWYFRAED). Residues 31–53 (AAPWNYSILVLAVLVVMTSMFLL) form a helical membrane-spanning segment. At 54–128 (RRSILANRNR…FLPDPQETES (75 aa)) the chain is on the cytoplasmic side. 2 disordered regions span residues 61-80 (RNRKKQPQDKETPEDLHLDD) and 101-128 (PDLAPGEPELKEKDSSLVFLPDPQETES). Composition is skewed to basic and acidic residues over residues 66-80 (QPQDKETPEDLHLDD) and 101-115 (PDLAPGEPELKEKDS). Ser-116 is subject to Phosphoserine.

This sequence belongs to the OST-beta family. Interacts with SLC51A. The Ost-alpha/Ost-beta complex is a heterodimer composed of alpha (SLC51A) and beta (SLC51B) subunit; induces the transport of SLC51A from the endoplasmic reticulum to the plasma membrane. In terms of tissue distribution, present at high level in ileum. In ileum, it is restricted to the apical domain on the mature villus enterocytes with little detectable expression in the goblet cells or crypt enterocytes (at protein level). Expressed in kidney but not in heart, brain, liver, spleen, embryo, lung, thymus, ovary nor testis.

It localises to the cell membrane. The enzyme catalyses taurocholate(out) = taurocholate(in). The catalysed reaction is tauroursodeoxycholate(out) = tauroursodeoxycholate(in). It catalyses the reaction glycoursodeoxycholate(out) = glycoursodeoxycholate(in). It carries out the reaction glycocholate(out) = glycocholate(in). The enzyme catalyses taurochenodeoxycholate(out) = taurochenodeoxycholate(in). The catalysed reaction is glycochenodeoxycholate(out) = glycochenodeoxycholate(in). It catalyses the reaction taurodeoxycholate(out) = taurodeoxycholate(in). It carries out the reaction glycodeoxycholate(out) = glycodeoxycholate(in). The enzyme catalyses prostaglandin E2(out) = prostaglandin E2(in). The catalysed reaction is estrone 3-sulfate(out) = estrone 3-sulfate(in). It catalyses the reaction dehydroepiandrosterone 3-sulfate(out) = dehydroepiandrosterone 3-sulfate(in). In terms of biological role, essential component of the Ost-alpha/Ost-beta complex, a heterodimer that acts as the intestinal basolateral transporter responsible for bile acid export from enterocytes into portal blood. The Ost-alpha/Ost-beta complex efficiently transports the major species of bile acids (taurocholate). Taurine conjugates are transported more efficiently across the basolateral membrane than glycine-conjugated bile acids. Can also transport steroids such as estrone 3-sulfate and dehydroepiandrosterone 3-sulfate, therefore playing a role in the enterohepatic circulation of sterols. Able to transport eicosanoids such as prostaglandin E2. Modulates SLC51A glycosylation, membrane trafficking and stability activities. The protein is Organic solute transporter subunit beta (Slc51b) of Mus musculus (Mouse).